The primary structure comprises 510 residues: 2,3-bisphosphoglycerate-independent phosphoglycerate mutase (510 aa).

Mn(2+)-binding residues include D14 and S64. The Phosphoserine intermediate role is filled by S64. Substrate is bound by residues H125, 155 to 156, R187, R193, 259 to 262, and K332; these read RD and RADR. Residues D399, H403, D440, H441, and H459 each contribute to the Mn(2+) site.

Belongs to the BPG-independent phosphoglycerate mutase family. As to quaternary structure, monomer. It depends on Mn(2+) as a cofactor.

It catalyses the reaction (2R)-2-phosphoglycerate = (2R)-3-phosphoglycerate. It participates in carbohydrate degradation; glycolysis; pyruvate from D-glyceraldehyde 3-phosphate: step 3/5. Catalyzes the interconversion of 2-phosphoglycerate and 3-phosphoglycerate. The chain is 2,3-bisphosphoglycerate-independent phosphoglycerate mutase from Ectopseudomonas mendocina (strain ymp) (Pseudomonas mendocina).